The primary structure comprises 496 residues: MGYHSVFIAVFLWSSMVCHNGLAMMDDGKLTSSSGPPNYDYADALAKAILFFEGQRSGKLPSSQRVKWREDSALSDGKLQNVNLMGGYYDAGDNVKFGWPMAFSTSLLSWAAVEYESEISSVNQLGYLQSAIRWGADFMLRAHTSPTTLYTQVGDGNADHNCWERPEDMDTPRTVYKIDANSPGTEVAAEYAAALSAASIVFKKIDAKYSSTLLSHSKSLFDFADKNRGSYSGSCPFYCSYSGYQDELLWAAAWLYKASGESKYLSYIISNQGWSQTVSEFSWDNKFVGAQTLLTEEFYGGKKDLAKIKTDAESFICAVMPGSNSRQIKTTPGGLLFTRDSSNLQYTTSSTMVLFIFSRILNRNHINGINCGSSHFTASQIRGFAKTQVEYILGKNPMKMSYMVGFGSKYPKQLHHRGSSIPSIKVHPAKVGCNAGLSDYYNSANPNPNTHVGAIVGGPDSNDRFNDARSDYSHAEPTTYINAAFVASISALLAKT.

The signal sequence occupies residues 1–23; sequence MGYHSVFIAVFLWSSMVCHNGLA. Catalysis depends on aspartate 93, which acts as the Nucleophile. Catalysis depends on residues histidine 415, aspartate 467, and glutamate 476.

The protein belongs to the glycosyl hydrolase 9 (cellulase E) family.

It carries out the reaction Endohydrolysis of (1-&gt;4)-beta-D-glucosidic linkages in cellulose, lichenin and cereal beta-D-glucans.. Involved in ripening fruit process. The sequence is that of Endoglucanase from Phaseolus vulgaris (Kidney bean).